Here is a 639-residue protein sequence, read N- to C-terminus: Threonine--tRNA ligase (639 aa).

One can recognise a TGS domain in the interval 1-61 (MIRITLPDNS…DHDARLQIIT (61 aa)). The catalytic stretch occupies residues 242–533 (DHRRLGRELD…LIEQHAGALP (292 aa)). Residues cysteine 333, histidine 384, and histidine 510 each contribute to the Zn(2+) site.

It belongs to the class-II aminoacyl-tRNA synthetase family. As to quaternary structure, homodimer. It depends on Zn(2+) as a cofactor.

It is found in the cytoplasm. The catalysed reaction is tRNA(Thr) + L-threonine + ATP = L-threonyl-tRNA(Thr) + AMP + diphosphate + H(+). Its function is as follows. Catalyzes the attachment of threonine to tRNA(Thr) in a two-step reaction: L-threonine is first activated by ATP to form Thr-AMP and then transferred to the acceptor end of tRNA(Thr). Also edits incorrectly charged L-seryl-tRNA(Thr). The chain is Threonine--tRNA ligase from Paracidovorax citrulli (strain AAC00-1) (Acidovorax citrulli).